We begin with the raw amino-acid sequence, 396 residues long: Multidrug efflux protein YfmO (396 aa).

12 helical membrane passes run 20-40, 56-76, 80-100, 114-134, 142-162, 171-191, 214-234, 249-269, 278-298, 301-321, 339-359, and 364-384; these read VWAVAFACVISFMGIGLVDPI, SLLFTSYLLVTGFMMFFSGAI, IGAKWTLILGLIFIIVFAGLG, GGWGLGNALFISTALAVIVGV, AIILYEAALGLGISVGPLAGG, APFFGVSVLMFIALIAISFML, GLLTMAVSAFLYNFGFFILLA, YVFFGWGLLLAITSVFTAPLV, SLVVLFIAFAAILVIMGIWTD, TLIITCIVVAGAVLGMVNTIM, AYSSVRFIGGALAPWIAGMLS, and ASTPYTVGGIVVFVGMLVLLM.

This sequence belongs to the major facilitator superfamily.

The protein resides in the cell membrane. In terms of biological role, acts to efflux copper or a copper complex. It is possible that YfmO could contribute to copper resistance. This is Multidrug efflux protein YfmO (yfmO) from Bacillus subtilis (strain 168).